The primary structure comprises 314 residues: Serine acetyltransferase 1, chloroplastic (314 aa).

This sequence belongs to the transferase hexapeptide repeat family. Homomultimer. Interacts with OASA1 and CYP20-3. Component of the cysteine synthase complex (CSC) composed of two OAS-TL dimers and one SAT hexamer. Mostly expressed in leaves. Localized in cortex, trichomes and vascular tissues, particularly in phloem.

Its subcellular location is the plastid. It localises to the chloroplast. It is found in the cytoplasm. The catalysed reaction is L-serine + acetyl-CoA = O-acetyl-L-serine + CoA. It participates in amino-acid biosynthesis; L-cysteine biosynthesis; L-cysteine from L-serine: step 1/2. In terms of biological role, serine acetyltransferase which catalyzes the formation of O-acetyl-L-serine from acetyl-CoA and L-serine. Also displays O-acetylserine (thio1)-lyase activity in vitro. May be involved in detoxification process by mediating the production of glutathione. This chain is Serine acetyltransferase 1, chloroplastic (SAT1), found in Arabidopsis thaliana (Mouse-ear cress).